The primary structure comprises 249 residues: Interleukin-1 receptor-associated kinase 1-binding protein 1 homolog (249 aa).

The protein belongs to the IRAK1BP1 family.

The protein resides in the cytoplasm. It localises to the nucleus. Functionally, may be part of a signaling pathway that leads to NF-kappa-B activation. The sequence is that of Interleukin-1 receptor-associated kinase 1-binding protein 1 homolog (irak1bp1) from Danio rerio (Zebrafish).